We begin with the raw amino-acid sequence, 376 residues long: TraB domain-containing protein (376 aa).

Position 1 is an N-acetylmethionine (methionine 1). Residues 1-34 (MDGEEQQPPHEANVEPVVPSEASEPVPRVLSGDP) form a disordered region. Over residues 14-27 (VEPVVPSEASEPVP) the composition is skewed to low complexity. A Phosphothreonine modification is found at threonine 65.

This Homo sapiens (Human) protein is TraB domain-containing protein (TRABD).